A 334-amino-acid polypeptide reads, in one-letter code: Thioredoxin reductase (334 aa).

FAD is bound by residues serine 11–glycine 14, threonine 40–alanine 41, glutamine 45, asparagine 54, cysteine 148, aspartate 294, and arginine 301–alanine 303. A disulfide bridge links cysteine 145 with cysteine 148.

This sequence belongs to the class-II pyridine nucleotide-disulfide oxidoreductase family. In terms of assembly, homodimer. Requires FAD as cofactor.

The enzyme catalyses [thioredoxin]-dithiol + NADP(+) = [thioredoxin]-disulfide + NADPH + H(+). Functionally, component of the thioredoxin-thioredoxin reductase system which may be involved in biosynthesis of penicillins and cephalosporins and may be important in determining the thiol-disulfide redox balance. The polypeptide is Thioredoxin reductase (TRR1) (Penicillium chrysogenum (Penicillium notatum)).